A 695-amino-acid chain; its full sequence is NADPH--cytochrome P450 reductase (695 aa).

Residues 1–8 (MAQLDTLD) lie on the Lumenal side of the membrane. Residues 9–31 (LVVLVVLLVGSAAYFTKGTYWAV) traverse the membrane as a helical segment. Topologically, residues 32 to 695 (PKDPYAASGP…SGSYQEDVWS (664 aa)) are cytoplasmic. A Flavodoxin-like domain is found at 66 to 221 (CVIFYGSQTG…DFLAWKEPMW (156 aa)). FMN contacts are provided by residues 72 to 77 (SQTGTA), 123 to 126 (ATYG), 169 to 178 (LGNNTYEHYQ), and Asp204. One can recognise an FAD-binding FR-type domain in the interval 277 to 538 (HNPFIAPIVE…HVRHSNFKLP (262 aa)). Residue Arg296 participates in NADP(+) binding. Residues 451 to 454 (RYYS), 469 to 471 (TAV), and 486 to 489 (GVTT) each bind FAD. NADP(+) is bound by residues Thr552, 614 to 615 (SR), 620 to 624 (KVYVQ), and Glu656. Residue Trp694 coordinates FAD.

Belongs to the NADPH--cytochrome P450 reductase family. The protein in the N-terminal section; belongs to the flavodoxin family. It in the C-terminal section; belongs to the flavoprotein pyridine nucleotide cytochrome reductase family. It depends on FAD as a cofactor. Requires FMN as cofactor.

Its subcellular location is the endoplasmic reticulum membrane. It is found in the mitochondrion outer membrane. The protein localises to the cell membrane. The enzyme catalyses 2 oxidized [cytochrome P450] + NADPH = 2 reduced [cytochrome P450] + NADP(+) + H(+). Functionally, this enzyme is required for electron transfer from NADP to cytochrome P450 in microsomes. It can also provide electron transfer to heme oxygenase and cytochrome B5. Involved in ergosterol biosynthesis. This Aspergillus terreus (strain NIH 2624 / FGSC A1156) protein is NADPH--cytochrome P450 reductase.